Consider the following 299-residue polypeptide: MSRGPSSAVLPSALGSRKLGPRSLSCLSDLDGGVALEPRACRPPGSPGRAPPPTPAPSGCDPRLRPIILRRARSLPSSPERRQKAAGAPGAACRPGCSQKLRVRFADALGLELAQVKVFNAGDDPSVPLHVLSRLAINSDLCCSSQDLEFTLHCLVPDFPPPVEAADFGERLQRQLVCLERVTCSDLGISGTVRVCNVAFEKQVAVRYTFSGWRSTHEAVARWRGPAGPEGTEDVFTFGFPVPPFLLELGSRVHFAVRYQVAGAEYWDNNDHRDYSLTCRNHALHMPRGECEESWIHFI.

Residues 1-22 form a disordered region; sequence MSRGPSSAVLPSALGSRKLGPR. A phosphoserine mark is found at Ser-23, Ser-25, and Ser-28. The tract at residues 37–94 is disordered; it reads EPRACRPPGSPGRAPPPTPAPSGCDPRLRPIILRRARSLPSSPERRQKAAGAPGAACR. The span at 44-56 shows a compositional bias: pro residues; it reads PGSPGRAPPPTPA. The segment covering 57–67 has biased composition (low complexity); the sequence is PSGCDPRLRPI. Position 74 is a phosphoserine (Ser-74). Residues 85–94 show a composition bias toward low complexity; that stretch reads AAGAPGAACR. Residues 101-104 carry the PP1-binding motif motif; it reads LRVR. Residue Ser-133 is modified to Phosphoserine. The region spanning 169-278 is the CBM21 domain; sequence GERLQRQLVC…NNDHRDYSLT (110 aa).

In terms of assembly, interacts with PPP1CC catalytic subunit of PP1, and associates with glycogen. Interacts with EPM2A; in the presence of NHLC1/malin the interaction leads to PPP1R3D ubiquitination and autophagic degradation. In terms of tissue distribution, expressed in all tissues tested. High expression in skeletal muscle and heart.

In terms of biological role, seems to act as a glycogen-targeting subunit for PP1. PP1 is essential for cell division, and participates in the regulation of glycogen metabolism, muscle contractility and protein synthesis. The chain is Protein phosphatase 1 regulatory subunit 3D (PPP1R3D) from Homo sapiens (Human).